We begin with the raw amino-acid sequence, 728 residues long: 1,4-alpha-glucan branching enzyme GlgB (728 aa).

The Nucleophile role is filled by D405. E458 serves as the catalytic Proton donor.

Belongs to the glycosyl hydrolase 13 family. GlgB subfamily. In terms of assembly, monomer.

The enzyme catalyses Transfers a segment of a (1-&gt;4)-alpha-D-glucan chain to a primary hydroxy group in a similar glucan chain.. Its pathway is glycan biosynthesis; glycogen biosynthesis. Functionally, catalyzes the formation of the alpha-1,6-glucosidic linkages in glycogen by scission of a 1,4-alpha-linked oligosaccharide from growing alpha-1,4-glucan chains and the subsequent attachment of the oligosaccharide to the alpha-1,6 position. This is 1,4-alpha-glucan branching enzyme GlgB from Escherichia coli O157:H7.